Here is a 141-residue protein sequence, read N- to C-terminus: MVISSVFSAFADIPSVYLISVNCGARELWLTITSIHFVSLREQRYEFLANSLGERTSSLKSQEEMVSVSRNGKQLLSEASFFRLGKHVHLNFLPFENTFEMALRNDFQIFCTSILFTCYIQSFSLLISNFFIAIEVSRSFF.

The helical transmembrane segment at 114–134 (ILFTCYIQSFSLLISNFFIAI) threads the bilayer.

Its subcellular location is the membrane. This is an uncharacterized protein from Schizosaccharomyces pombe (strain 972 / ATCC 24843) (Fission yeast).